The sequence spans 115 residues: Gonadotropin subunit beta-2 (115 aa).

6 cysteine pairs are disulfide-bonded: C6–C54, C20–C69, C23–C107, C31–C85, C35–C87, and C90–C97. N10 is a glycosylation site (N-linked (GlcNAc...) asparagine).

The protein belongs to the glycoprotein hormones subunit beta family. Heterodimer of an alpha and a beta chain.

It is found in the secreted. In terms of biological role, involved in gametogenesis and steroidogenesis. The chain is Gonadotropin subunit beta-2 (cgbb) from Thunnus obesus (Bigeye tuna).